The sequence spans 548 residues: Chaperonin GroEL (548 aa).

ATP-binding positions include 30-33, lysine 51, 87-91, glycine 415, 479-481, and aspartate 495; these read TLGP, DGTTT, and NAA.

The protein belongs to the chaperonin (HSP60) family. As to quaternary structure, forms a cylinder of 14 subunits composed of two heptameric rings stacked back-to-back. Interacts with the co-chaperonin GroES.

Its subcellular location is the cytoplasm. It catalyses the reaction ATP + H2O + a folded polypeptide = ADP + phosphate + an unfolded polypeptide.. Together with its co-chaperonin GroES, plays an essential role in assisting protein folding. The GroEL-GroES system forms a nano-cage that allows encapsulation of the non-native substrate proteins and provides a physical environment optimized to promote and accelerate protein folding. This chain is Chaperonin GroEL, found in Serratia proteamaculans (strain 568).